The following is a 483-amino-acid chain: Cysteine--tRNA ligase (483 aa).

Residue cysteine 28 participates in Zn(2+) binding. The short motif at 30 to 40 is the 'HIGH' region element; it reads MTVYDYCHLGH. Zn(2+) contacts are provided by cysteine 212, histidine 237, and glutamate 241. Positions 269-273 match the 'KMSKS' region motif; that stretch reads KMSKS. Residue lysine 272 participates in ATP binding.

This sequence belongs to the class-I aminoacyl-tRNA synthetase family. As to quaternary structure, monomer. Requires Zn(2+) as cofactor.

It is found in the cytoplasm. The catalysed reaction is tRNA(Cys) + L-cysteine + ATP = L-cysteinyl-tRNA(Cys) + AMP + diphosphate. The chain is Cysteine--tRNA ligase from Bordetella avium (strain 197N).